The following is a 346-amino-acid chain: Phosphoribosylformylglycinamidine cyclo-ligase (346 aa).

It belongs to the AIR synthase family.

It localises to the cytoplasm. The enzyme catalyses 2-formamido-N(1)-(5-O-phospho-beta-D-ribosyl)acetamidine + ATP = 5-amino-1-(5-phospho-beta-D-ribosyl)imidazole + ADP + phosphate + H(+). The protein operates within purine metabolism; IMP biosynthesis via de novo pathway; 5-amino-1-(5-phospho-D-ribosyl)imidazole from N(2)-formyl-N(1)-(5-phospho-D-ribosyl)glycinamide: step 2/2. The sequence is that of Phosphoribosylformylglycinamidine cyclo-ligase from Alteromonas mediterranea (strain DSM 17117 / CIP 110805 / LMG 28347 / Deep ecotype).